Consider the following 130-residue polypeptide: Small ribosomal subunit protein uS11 (130 aa).

It belongs to the universal ribosomal protein uS11 family. In terms of assembly, part of the 30S ribosomal subunit. Interacts with proteins S7 and S18. Binds to IF-3.

Its function is as follows. Located on the platform of the 30S subunit, it bridges several disparate RNA helices of the 16S rRNA. Forms part of the Shine-Dalgarno cleft in the 70S ribosome. The polypeptide is Small ribosomal subunit protein uS11 (Syntrophus aciditrophicus (strain SB)).